A 180-amino-acid polypeptide reads, in one-letter code: Translation machinery-associated protein 16 homolog (180 aa).

The span at 1-12 shows a compositional bias: basic and acidic residues; the sequence is MTNLRKELEKCK. Residues 1 to 32 form a disordered region; it reads MTNLRKELEKCKHPNSRKTKALGKKARRQNNK. Basic residues predominate over residues 13-32; that stretch reads HPNSRKTKALGKKARRQNNK.

It belongs to the TMA16 family.

The protein is Translation machinery-associated protein 16 homolog of Drosophila melanogaster (Fruit fly).